The primary structure comprises 308 residues: MARYMIKRFWAMAATILVITTLTFVLMKVIPGSPFNEERGTNEAVQKNLEAYYHLDDPLIFQYIFYLKSIITFDFGPSIKKPSDSVNDMLERGFPVSFELGMTAIVIAVISGLVLGVIAALRRNGFLDYAAMSLAVLGISIPNFILATLLIQQFAVNLKLFPAATWTSPIHMVLPTAALAVGPMAIIARLTRSSMVEVLTQDYIRTAKAKGLSPFKIIVKHALRNALMPVITVLGTLVASILTGSFVIEKIFAIPGMGKYFVESINQRDYPVIMGTTVFYSVILIIMLFLVDLAYGLLDPRIKLHKKG.

The next 7 membrane-spanning stretches (helical) occupy residues 10 to 30 (WAMAATILVITTLTFVLMKVI), 59 to 79 (LIFQYIFYLKSIITFDFGPSI), 100 to 120 (LGMTAIVIAVISGLVLGVIAA), 131 to 151 (AMSLAVLGISIPNFILATLLI), 168 to 188 (SPIHMVLPTAALAVGPMAIIA), 228 to 248 (MPVITVLGTLVASILTGSFVI), and 278 to 298 (VFYSVILIIMLFLVDLAYGLL). The region spanning 94-295 (FPVSFELGMT…IMLFLVDLAY (202 aa)) is the ABC transmembrane type-1 domain.

The protein belongs to the binding-protein-dependent transport system permease family. OppBC subfamily.

The protein localises to the cell membrane. Functionally, probably part of the ABC transporter DppBCDE involved in dipeptide transport. Responsible for the translocation of the substrate across the membrane. The chain is Dipeptide transport system permease protein DppB (dppB) from Bacillus subtilis (strain 168).